The primary structure comprises 73 residues: Dermaseptin-1 (73 aa).

The signal sequence occupies residues 1-22 (MAFLKKSIFLALFLGMVSLSIC). The propeptide at 23–43 (EEEKRENEGEEEQEDDEQSEM) is removed in mature form. The disordered stretch occupies residues 25 to 46 (EKRENEGEEEQEDDEQSEMKRG). The span at 30–40 (EGEEEQEDDEQ) shows a compositional bias: acidic residues. Leu-70 carries the leucine amide modification. The propeptide at 72–73 (EQ) is removed in mature form.

Expressed by the skin glands.

It is found in the secreted. Functionally, has antiparasitic activity against trypomastigote form of T.cruzi (IC(50)=0.68 uM) in vitro but not against L.infantum. Probably acts by permeabilizing cell membranes. In vitro, shows no cytotoxicity against macrophages. Has antibacterial activity. This chain is Dermaseptin-1, found in Pithecopus nordestinus (Northeastern Brazilian leaf frog).